We begin with the raw amino-acid sequence, 231 residues long: Small ribosomal subunit protein uS3 (231 aa).

The region spanning 39–107 (IRELLHKELK…DVVINIVEIR (69 aa)) is the KH type-2 domain.

Belongs to the universal ribosomal protein uS3 family. Part of the 30S ribosomal subunit. Forms a tight complex with proteins S10 and S14.

Its function is as follows. Binds the lower part of the 30S subunit head. Binds mRNA in the 70S ribosome, positioning it for translation. The protein is Small ribosomal subunit protein uS3 of Nitrobacter hamburgensis (strain DSM 10229 / NCIMB 13809 / X14).